The chain runs to 474 residues: tRNA-2-methylthio-N(6)-dimethylallyladenosine synthase (474 aa).

An MTTase N-terminal domain is found at 3–120; the sequence is QKLHIKTWGC…LPEMINQIRG (118 aa). [4Fe-4S] cluster is bound by residues C12, C49, C83, C157, C161, and C164. The 233-residue stretch at 143–375 folds into the Radical SAM core domain; it reads RAEGPTAFVS…QQRINNQAAQ (233 aa). The 64-residue stretch at 378–441 folds into the TRAM domain; the sequence is RAMLGTEQRV…TNSLRGEVVR (64 aa).

This sequence belongs to the methylthiotransferase family. MiaB subfamily. As to quaternary structure, monomer. Requires [4Fe-4S] cluster as cofactor.

It is found in the cytoplasm. It catalyses the reaction N(6)-dimethylallyladenosine(37) in tRNA + (sulfur carrier)-SH + AH2 + 2 S-adenosyl-L-methionine = 2-methylsulfanyl-N(6)-dimethylallyladenosine(37) in tRNA + (sulfur carrier)-H + 5'-deoxyadenosine + L-methionine + A + S-adenosyl-L-homocysteine + 2 H(+). Its function is as follows. Catalyzes the methylthiolation of N6-(dimethylallyl)adenosine (i(6)A), leading to the formation of 2-methylthio-N6-(dimethylallyl)adenosine (ms(2)i(6)A) at position 37 in tRNAs that read codons beginning with uridine. The sequence is that of tRNA-2-methylthio-N(6)-dimethylallyladenosine synthase from Histophilus somni (strain 129Pt) (Haemophilus somnus).